The primary structure comprises 238 residues: Ribonuclease PH (238 aa).

Phosphate is bound by residues Arg-86 and 124 to 126; that span reads GTR.

The protein belongs to the RNase PH family. As to quaternary structure, homohexameric ring arranged as a trimer of dimers.

The enzyme catalyses tRNA(n+1) + phosphate = tRNA(n) + a ribonucleoside 5'-diphosphate. Its function is as follows. Phosphorolytic 3'-5' exoribonuclease that plays an important role in tRNA 3'-end maturation. Removes nucleotide residues following the 3'-CCA terminus of tRNAs; can also add nucleotides to the ends of RNA molecules by using nucleoside diphosphates as substrates, but this may not be physiologically important. Probably plays a role in initiation of 16S rRNA degradation (leading to ribosome degradation) during starvation. This is Ribonuclease PH from Brucella anthropi (strain ATCC 49188 / DSM 6882 / CCUG 24695 / JCM 21032 / LMG 3331 / NBRC 15819 / NCTC 12168 / Alc 37) (Ochrobactrum anthropi).